The chain runs to 247 residues: Carbonic anhydrase (247 aa).

A signal peptide spans Met-1–Ala-34. Arg-93–Asp-95 lines the substrate pocket. Glu-96 serves as the catalytic Proton donor/acceptor. Substrate is bound at residue Gln-109–Asp-110. A Zn(2+)-binding site is contributed by His-115. Residue Glu-118 is part of the active site. Residues His-151 and His-156 each contribute to the Zn(2+) site. Asn-236 provides a ligand contact to substrate.

This sequence belongs to the gamma-class carbonic anhydrase family. Homotrimer. Zn(2+) is required as a cofactor.

The protein resides in the secreted. The enzyme catalyses hydrogencarbonate + H(+) = CO2 + H2O. Functionally, reversible hydration of carbon dioxide. Important for growth on acetate. As a probably extracellular enzyme, it may support a H(+)/CH(3)COO(-) symport mechanism and/or conversion of CO(2) to HCO(3)(-), removing excess CO(2) produced by growth on acetate. In Methanosarcina thermophila (strain ATCC 43570 / DSM 1825 / OCM 12 / VKM B-1830 / TM-1), this protein is Carbonic anhydrase.